The primary structure comprises 225 residues: tRNA (guanine-N(1)-)-methyltransferase (225 aa).

S-adenosyl-L-methionine-binding positions include glycine 112 and 132–137 (IGDYVL).

The protein belongs to the RNA methyltransferase TrmD family. As to quaternary structure, homodimer.

Its subcellular location is the cytoplasm. The catalysed reaction is guanosine(37) in tRNA + S-adenosyl-L-methionine = N(1)-methylguanosine(37) in tRNA + S-adenosyl-L-homocysteine + H(+). Specifically methylates guanosine-37 in various tRNAs. This chain is tRNA (guanine-N(1)-)-methyltransferase, found in Porphyromonas gingivalis (strain ATCC BAA-308 / W83).